The chain runs to 181 residues: 6,7-dimethyl-8-ribityllumazine synthase (181 aa).

Residues tyrosine 30, 61 to 63 (ALE), and 87 to 89 (CII) contribute to the 5-amino-6-(D-ribitylamino)uracil site. 92–93 (ET) serves as a coordination point for (2S)-2-hydroxy-3-oxobutyl phosphate. Histidine 95 serves as the catalytic Proton donor. 5-amino-6-(D-ribitylamino)uracil is bound at residue asparagine 120. Arginine 134 contacts (2S)-2-hydroxy-3-oxobutyl phosphate.

It belongs to the DMRL synthase family.

It catalyses the reaction (2S)-2-hydroxy-3-oxobutyl phosphate + 5-amino-6-(D-ribitylamino)uracil = 6,7-dimethyl-8-(1-D-ribityl)lumazine + phosphate + 2 H2O + H(+). It participates in cofactor biosynthesis; riboflavin biosynthesis; riboflavin from 2-hydroxy-3-oxobutyl phosphate and 5-amino-6-(D-ribitylamino)uracil: step 1/2. In terms of biological role, catalyzes the formation of 6,7-dimethyl-8-ribityllumazine by condensation of 5-amino-6-(D-ribitylamino)uracil with 3,4-dihydroxy-2-butanone 4-phosphate. This is the penultimate step in the biosynthesis of riboflavin. In Beijerinckia indica subsp. indica (strain ATCC 9039 / DSM 1715 / NCIMB 8712), this protein is 6,7-dimethyl-8-ribityllumazine synthase.